The sequence spans 59 residues: Dimethylamine corrinoid protein (59 aa).

The B12-binding domain maps to 1–59; it reads TLQGQKDVIELLKEEGLRDKIKVMVGGAPATQAWADKIGADCYAENASEAVAKAKELLA.

This sequence belongs to the methylamine corrinoid protein family.

It participates in one-carbon metabolism; methanogenesis from dimethylamine. Functionally, acts as a methyl group carrier between MtbB and MtbA. The polypeptide is Dimethylamine corrinoid protein (mtbC) (Methanosarcina thermophila).